A 127-amino-acid chain; its full sequence is Prophage antitermination protein Q homolog QuuD (127 aa).

The protein belongs to the phage antitermination Q type 1 family.

In terms of biological role, positively regulate expression of some phage genes. Bacterial host RNA polymerase modified by antitermination proteins transcribes through termination sites that otherwise prevent expression of the regulated genes. This Escherichia coli (strain K12) protein is Prophage antitermination protein Q homolog QuuD (quuD).